The sequence spans 729 residues: Fatty acid oxidation complex subunit alpha (729 aa).

Residues 1–189 (MLYKGDTLYL…KIGLVDGVVK (189 aa)) are enoyl-CoA hydratase/isomerase. D296 lines the substrate pocket. Residues 311 to 729 (ETPKQAAVLG…ARPVGSLKTA (419 aa)) form a 3-hydroxyacyl-CoA dehydrogenase region. NAD(+) is bound by residues M324, D343, 400-402 (VVE), K407, and S429. H450 functions as the For 3-hydroxyacyl-CoA dehydrogenase activity in the catalytic mechanism. N453 serves as a coordination point for NAD(+). Substrate-binding residues include N500 and Y660. Residues 708–729 (RHNEPYYPPVEPARPVGSLKTA) are disordered.

In the N-terminal section; belongs to the enoyl-CoA hydratase/isomerase family. The protein in the C-terminal section; belongs to the 3-hydroxyacyl-CoA dehydrogenase family. In terms of assembly, heterotetramer of two alpha chains (FadB) and two beta chains (FadA).

The catalysed reaction is a (3S)-3-hydroxyacyl-CoA + NAD(+) = a 3-oxoacyl-CoA + NADH + H(+). It carries out the reaction a (3S)-3-hydroxyacyl-CoA = a (2E)-enoyl-CoA + H2O. It catalyses the reaction a 4-saturated-(3S)-3-hydroxyacyl-CoA = a (3E)-enoyl-CoA + H2O. The enzyme catalyses (3S)-3-hydroxybutanoyl-CoA = (3R)-3-hydroxybutanoyl-CoA. The catalysed reaction is a (3Z)-enoyl-CoA = a 4-saturated (2E)-enoyl-CoA. It carries out the reaction a (3E)-enoyl-CoA = a 4-saturated (2E)-enoyl-CoA. The protein operates within lipid metabolism; fatty acid beta-oxidation. Involved in the aerobic and anaerobic degradation of long-chain fatty acids via beta-oxidation cycle. Catalyzes the formation of 3-oxoacyl-CoA from enoyl-CoA via L-3-hydroxyacyl-CoA. It can also use D-3-hydroxyacyl-CoA and cis-3-enoyl-CoA as substrate. The protein is Fatty acid oxidation complex subunit alpha of Salmonella choleraesuis (strain SC-B67).